A 461-amino-acid chain; its full sequence is Protein KlcB (461 aa).

2 disordered regions span residues 84-107 (PEAT…TEDK) and 349-379 (RAKA…EDAP). Residues 91-101 (ARRRTKARKSK) are compositionally biased toward basic residues. The segment covering 357–377 (GQRREPVTPAKPEPEPAKDED) has biased composition (basic and acidic residues).

The chain is Protein KlcB (klcB) from Escherichia coli.